The sequence spans 451 residues: COBRA-like protein 6 (451 aa).

An N-terminal signal peptide occupies residues 1–21; that stretch reads MAVLGSLLLLILAATLSVAVA. Asn30, Asn155, Asn163, Asn202, Asn227, Asn323, Asn338, and Asn357 each carry an N-linked (GlcNAc...) asparagine glycan. A lipid anchor (GPI-anchor amidated asparagine) is attached at Asn426. Positions 427 to 451 are cleaved as a propeptide — removed in mature form; sequence AAPPAAASLVGSAVAMAALVFFLMA.

It belongs to the COBRA family.

The protein localises to the cell membrane. Functionally, involved in determining the orientation of cell expansion, probably by playing an important role in cellulose deposition. May act by recruiting cellulose synthesizing complexes to discrete positions on the cell surface. In Oryza sativa subsp. japonica (Rice), this protein is COBRA-like protein 6 (BC1L7).